Consider the following 343-residue polypeptide: Anthranilate phosphoribosyltransferase (343 aa).

Residues G84, 87–88 (GD), T92, 94–97 (NIST), 112–120 (KHGNRSASS), and S124 contribute to the 5-phospho-alpha-D-ribose 1-diphosphate site. An anthranilate-binding site is contributed by G84. S96 lines the Mg(2+) pocket. N115 provides a ligand contact to anthranilate. Position 170 (R170) interacts with anthranilate. D229 and E230 together coordinate Mg(2+).

It belongs to the anthranilate phosphoribosyltransferase family. In terms of assembly, homodimer. The cofactor is Mg(2+).

It carries out the reaction N-(5-phospho-beta-D-ribosyl)anthranilate + diphosphate = 5-phospho-alpha-D-ribose 1-diphosphate + anthranilate. The protein operates within amino-acid biosynthesis; L-tryptophan biosynthesis; L-tryptophan from chorismate: step 2/5. Its function is as follows. Catalyzes the transfer of the phosphoribosyl group of 5-phosphorylribose-1-pyrophosphate (PRPP) to anthranilate to yield N-(5'-phosphoribosyl)-anthranilate (PRA). The sequence is that of Anthranilate phosphoribosyltransferase from Bordetella pertussis (strain Tohama I / ATCC BAA-589 / NCTC 13251).